Consider the following 538-residue polypeptide: MVELVISPSLTVNSDCLDKLKFNRADAAVWTLSDRQGITKSAPLRVSQLFSRSCPRVLPRQPSTAMAAYGQTQYSAGIQQATPYTAYPPPAQAYGIPSYSIKTEDSLNHSPGQSGFLSYGSSFSTSPTGQSPYTYQMHGTTGFYQGGNGLGNAAGFGSVHQDYPSYPGFPQSQYPQYYGSSYNPPYVPASSICPSPLSTSTYVLQEASHNVPNQSSESLAGEYNTHNGPSTPAKEGDTDRPHRASDGKLRGRSKRSSDPSPAGDNEIERVFVWDLDETIIIFHSLLTGTFASRYGKDTTTSVRIGLMMEEMIFNLADTHLFFNDLEDCDQIHVDDVSSDDNGQDLSTYNFSADGFHSSAPGANLCLGSGVHGGVDWMRKLAFRYRRVKEMYNTYKNNVGGLIGTPKRETWLQLRAELEALTDLWLTHSLKALNLINSRPNCVNVLVTTTQLIPALAKVLLYGLGSVFPIENIYSATKTGKESCFERIMQRFGRKAVYVVIGDGVEEEQGAKKHNMPFWRISCHADLEALRHALELEYL.

The segment covering 209-230 (HNVPNQSSESLAGEYNTHNGPS) has biased composition (polar residues). Positions 209 to 263 (HNVPNQSSESLAGEYNTHNGPSTPAKEGDTDRPHRASDGKLRGRSKRSSDPSPAG) are disordered. A compositionally biased stretch (basic and acidic residues) spans 234–249 (KEGDTDRPHRASDGKL). D274 (nucleophile) is an active-site residue. Residues D274, D276, and D502 each contribute to the Mg(2+) site. Residue D276 is the Proton donor of the active site.

Belongs to the HAD-like hydrolase superfamily. EYA family. Interacts with DACH2 and SIX1, and probably with SIX2, SIX4 and SIX5. Interacts with CAPN8. Interacts with GNAZ and GNAI2; this precludes interaction with SIX1. It depends on Mg(2+) as a cofactor. Highest expression in muscle with lower levels in kidney, placenta, pancreas, brain and heart.

The protein resides in the cytoplasm. The protein localises to the nucleus. The enzyme catalyses O-phospho-L-tyrosyl-[protein] + H2O = L-tyrosyl-[protein] + phosphate. Functions both as protein phosphatase and as transcriptional coactivator for SIX1, and probably also for SIX2, SIX4 and SIX5. Tyrosine phosphatase that dephosphorylates 'Tyr-142' of histone H2AX (H2AXY142ph) and promotes efficient DNA repair via the recruitment of DNA repair complexes containing MDC1. 'Tyr-142' phosphorylation of histone H2AX plays a central role in DNA repair and acts as a mark that distinguishes between apoptotic and repair responses to genotoxic stress. Its function as histone phosphatase may contribute to its function in transcription regulation during organogenesis. Plays an important role in hypaxial muscle development together with SIX1 and DACH2; in this it is functionally redundant with EYA1. This Homo sapiens (Human) protein is Protein phosphatase EYA2 (EYA2).